Consider the following 301-residue polypeptide: Troponin T, cardiac muscle (301 aa).

Over residues 1–72 the composition is skewed to acidic residues; sequence MSDAEEVVEE…EAKDAEEGPV (72 aa). 2 disordered regions span residues 1–97 and 125–224; these read MSDA…DGER and NRKK…KKKI. Ser2 is subject to N-acetylserine. Ser2 carries the phosphoserine; by CK2 modification. 2 stretches are compositionally biased toward basic and acidic residues: residues 125–186 and 206–224; these read NRKK…DEAR and QTERKSGKRQTEREKKKKI. Thr207 carries the phosphothreonine; by PKC/PRKCA modification. Ser211 is modified (phosphoserine; by PKC/PRKCA). Thr216 bears the Phosphothreonine; by PKC/PRKCA and RAF1 mark. Thr297 carries the phosphothreonine; by PKC/PRKCA modification.

This sequence belongs to the troponin T family. Phosphorylation at Thr-216 by PRKCA induces significant reduction in myofilament calcium sensitivity and actomyosin ATPase activity.

Functionally, troponin T is the tropomyosin-binding subunit of troponin, the thin filament regulatory complex which confers calcium-sensitivity to striated muscle actomyosin ATPase activity. In Mus musculus (Mouse), this protein is Troponin T, cardiac muscle (Tnnt2).